Consider the following 316-residue polypeptide: Alpha- and gamma-adaptin-binding protein p34 (316 aa).

The segment at Ala-198–Gly-232 is disordered. Positions Gly-222–Gly-232 are enriched in low complexity. Phosphoserine occurs at positions 311 and 312.

As to quaternary structure, associated with AP-1 and AP-2 complexes.

It localises to the cytoplasm. It is found in the cytosol. Functionally, may be involved in endocytic recycling of growth factor receptors such as EGFR. The polypeptide is Alpha- and gamma-adaptin-binding protein p34 (Aagab) (Mus musculus (Mouse)).